Consider the following 353-residue polypeptide: 26S proteasome non-ATPase regulatory subunit 8 (353 aa).

Residues 1–25 (MFIKGRAAKTPRGEPRRSSRGGRKL) form a disordered region. Residues 165-334 (PSFERYMAQL…QQKPEDSTIP (170 aa)) enclose the PCI domain. K300 participates in a covalent cross-link: Glycyl lysine isopeptide (Lys-Gly) (interchain with G-Cter in SUMO2).

The protein belongs to the proteasome subunit S14 family. In terms of assembly, component of the 19S proteasome regulatory particle complex. The 26S proteasome consists of a 20S core particle (CP) and two 19S regulatory subunits (RP). The regulatory particle is made of a lid composed of 9 subunits including PSMD8, a base containing 6 ATPases and few additional components. Interacts with DDI2. Interacts with TASOR. As to expression, expressed in the Sertoli cells of the testis.

Functionally, component of the 26S proteasome, a multiprotein complex involved in the ATP-dependent degradation of ubiquitinated proteins. This complex plays a key role in the maintenance of protein homeostasis by removing misfolded or damaged proteins, which could impair cellular functions, and by removing proteins whose functions are no longer required. Therefore, the proteasome participates in numerous cellular processes, including cell cycle progression, apoptosis, or DNA damage repair. The polypeptide is 26S proteasome non-ATPase regulatory subunit 8 (Psmd8) (Mus musculus (Mouse)).